We begin with the raw amino-acid sequence, 473 residues long: H(+)/Cl(-) exchange transporter ClcA (473 aa).

Residues Met1–Pro32 lie on the Cytoplasmic side of the membrane. A helical transmembrane segment spans residues Leu33 to Val69. The Periplasmic segment spans residues His70–Pro76. Residues Leu77–Tyr100 traverse the membrane as a helical segment. Positions Gly106–Pro110 match the Selectivity filter part_1 motif. Ser107 contributes to the chloride binding site. Residues Ile109 to Leu116 constitute an intramembrane region (helical). The Cytoplasmic portion of the chain corresponds to Glu117 to Arg123. The next 2 membrane-spanning stretches (helical) occupy residues Trp124–Gly141 and Glu148–Phe166. The short motif at Gly146–Pro150 is the Selectivity filter part_2 element. Residues Arg167–Thr176 lie on the Cytoplasmic side of the membrane. 2 consecutive intramembrane regions (helical) follow at residues Leu177–Ala189 and Pro193–Ile201. The Cytoplasmic portion of the chain corresponds to Glu202 to Ser214. Residues Ile215–Phe232 traverse the membrane as a helical segment. The Periplasmic portion of the chain corresponds to Asn233–Leu252. The helical transmembrane segment at Trp253 to His281 threads the bilayer. The Cytoplasmic segment spans residues Arg282–Asn287. A helical membrane pass occupies residues Ile288 to Ala309. Over Pro310 to Ser329 the chain is Periplasmic. The next 2 helical transmembrane spans lie at Met330 to Ser349 and Gly355 to Val376. Positions Gly355–Pro359 match the Selectivity filter part_3 motif. Chloride-binding residues include Ile356 and Phe357. The Periplasmic segment spans residues Glu377 to Ala386. An intramembrane region (helical) is located at residues Gly387–Ser401. The note=Loop between two helices intramembrane region spans Ile402–Ala404. An intramembrane region (helical) is located at residues Pro405–Thr416. The note=Loop between two helices intramembrane region spans Asp417–Leu421. Residues Ile422–Phe438 traverse the membrane as a helical segment. The Cytoplasmic segment spans residues Thr439–Thr473. Position 445 (Tyr445) interacts with chloride.

This sequence belongs to the chloride channel (TC 2.A.49) family. ClcA subfamily. As to quaternary structure, homodimer.

Its subcellular location is the cell inner membrane. The enzyme catalyses 2 chloride(in) + H(+)(out) = 2 chloride(out) + H(+)(in). In terms of biological role, proton-coupled chloride transporter. Functions as antiport system and exchanges two chloride ions for 1 proton. Probably acts as an electrical shunt for an outwardly-directed proton pump that is linked to amino acid decarboxylation, as part of the extreme acid resistance (XAR) response. The protein is H(+)/Cl(-) exchange transporter ClcA of Shigella flexneri serotype 5b (strain 8401).